A 782-amino-acid chain; its full sequence is Cysteine-rich protein 2-binding protein (782 aa).

Residue Ser4 is modified to Phosphoserine. The segment at 13–33 is disordered; sequence RHDDEATRTSTSEGLEEGEVE. The residue at position 231 (Lys231) is an N6-acetyllysine. Residues 251 to 282 are disordered; sequence PVESAMELKEKRSRTQEAKDIRRAQKEAAGFL. Residues 256–276 show a composition bias toward basic and acidic residues; sequence MELKEKRSRTQEAKDIRRAQK. A Phosphoserine modification is found at Ser285. Position 292 is an N6-acetyllysine (Lys292). Over residues 315-335 the composition is skewed to low complexity; it reads LSSSDRTPLTSPSPSPSLDFS. 2 disordered regions span residues 315 to 346 and 400 to 460; these read LSSS…HSAT and VRKK…EPRY. Composition is skewed to basic and acidic residues over residues 405–426 and 446–459; these read RGPE…RMDI and KPQL…KEPR. Ser416 is subject to Phosphoserine. The 145-residue stretch at 638 to 782 folds into the N-acetyltransferase domain; sequence LDYCYVRPNH…KHAFFLRLRR (145 aa).

In terms of assembly, interacts with the LIM 1 domain of CSRP2. Component of the ADA2A-containing complex (ATAC), composed of CSRP2BP, KAT2A, TADA2L, TADA3L, ZZ3, MBIP, WDR5, YEATS2, CCDC101 and DR1. In the complex, it probably interacts directly with KAT2A, MBIP and WDR5. Expressed in skeletal muscle, heart, lung, placenta, brain, liver, pancreas and kidney. High expression in skeletal muscle and heart. Lower expression in lung.

It is found in the nucleus. The protein localises to the cytoplasm. In terms of biological role, component of the ATAC complex, a complex with histone acetyltransferase activity on histones H3 and H4. May function as a scaffold for the ATAC complex to promote ATAC complex stability. Has also weak histone acetyltransferase activity toward histone H4. Required for the normal progression through G1 and G2/M phases of the cell cycle. In Homo sapiens (Human), this protein is Cysteine-rich protein 2-binding protein.